Here is a 375-residue protein sequence, read N- to C-terminus: UPF0612 protein C569.003 (375 aa).

Belongs to the UPF0612 family.

It localises to the cytoplasm. The protein is UPF0612 protein C569.003 of Schizosaccharomyces pombe (strain 972 / ATCC 24843) (Fission yeast).